We begin with the raw amino-acid sequence, 312 residues long: Ribonuclease Z (312 aa).

7 residues coordinate Zn(2+): histidine 62, histidine 64, aspartate 66, histidine 67, histidine 144, aspartate 215, and histidine 273. Aspartate 66 serves as the catalytic Proton acceptor.

It belongs to the RNase Z family. In terms of assembly, homodimer. Zn(2+) serves as cofactor.

It carries out the reaction Endonucleolytic cleavage of RNA, removing extra 3' nucleotides from tRNA precursor, generating 3' termini of tRNAs. A 3'-hydroxy group is left at the tRNA terminus and a 5'-phosphoryl group is left at the trailer molecule.. In terms of biological role, zinc phosphodiesterase, which displays some tRNA 3'-processing endonuclease activity. Probably involved in tRNA maturation, by removing a 3'-trailer from precursor tRNA. This chain is Ribonuclease Z, found in Prochlorococcus marinus subsp. pastoris (strain CCMP1986 / NIES-2087 / MED4).